The following is a 59-amino-acid chain: Cytochrome c oxidase subunit 9, mitochondrial (59 aa).

Over 2 to 8 (TIAPITG) the chain is Mitochondrial matrix. Residues 9-44 (TIKRRVIMDIVLGFSLGGVMASYWWWGFHMDKINKR) form a helical membrane-spanning segment. At 45–56 (EKFYAELAERKK) the chain is on the mitochondrial intermembrane side. The propeptide at 57–59 (QEN) is removed in mature form.

Belongs to the fungal cytochrome c oxidase subunit 7a family. In terms of assembly, component of the cytochrome c oxidase (complex IV, CIV), a multisubunit enzyme composed of 12 subunits. The complex is composed of a catalytic core of 3 subunits COX1, COX2 and COX3, encoded in the mitochondrial DNA, and 9 supernumerary subunits COX4, COX5A (or COX5B), COX6, COX7, COX8, COX9, COX12, COX13 and COX26, which are encoded in the nuclear genome. The complex exists as a monomer or a dimer and forms supercomplexes (SCs) in the inner mitochondrial membrane with a dimer of ubiquinol-cytochrome c oxidoreductase (cytochrome b-c1 complex, complex III, CIII), resulting in 2 different assemblies (supercomplexes III(2)IV and III(2)IV(2)).

It localises to the mitochondrion inner membrane. Its pathway is energy metabolism; oxidative phosphorylation. Its function is as follows. Component of the cytochrome c oxidase, the last enzyme in the mitochondrial electron transport chain which drives oxidative phosphorylation. The respiratory chain contains 3 multisubunit complexes succinate dehydrogenase (complex II, CII), ubiquinol-cytochrome c oxidoreductase (cytochrome b-c1 complex, complex III, CIII) and cytochrome c oxidase (complex IV, CIV), that cooperate to transfer electrons derived from NADH and succinate to molecular oxygen, creating an electrochemical gradient over the inner membrane that drives transmembrane transport and the ATP synthase. Cytochrome c oxidase is the component of the respiratory chain that catalyzes the reduction of oxygen to water. Electrons originating from reduced cytochrome c in the intermembrane space (IMS) are transferred via the dinuclear copper A center (CU(A)) of COX2 and heme A of COX1 to the active site in COX1, a binuclear center (BNC) formed by heme A3 and copper B (CU(B)). The BNC reduces molecular oxygen to 2 water molecules using 4 electrons from cytochrome c in the IMS and 4 protons from the mitochondrial matrix. The polypeptide is Cytochrome c oxidase subunit 9, mitochondrial (COX9) (Saccharomyces cerevisiae (strain ATCC 204508 / S288c) (Baker's yeast)).